Reading from the N-terminus, the 262-residue chain is MIHETAKIHPSAVIEGNVTIEANVSVGPFTYISGNVTIGEGTEVMSHVVIKGDTTIGKDNRIFAFAIIGEESQDKKYGGEATTVVIGDRNVIRESVQIHRGTVQDRGVTTVGSDNLLCVNVHIAHDCVVGDNIIMGNNATLAGHVTVEDFAIVSALSPVHQFCTVGAHSFIGGASVVVQDVPPFVMAQGNHCKPFGINIEGLKRRGFEKAEIHAIRRAYKALYRNGNTLEEAKVEINKEIEAFPVLQGFLDLFEKSTRGIIR.

The protein belongs to the transferase hexapeptide repeat family. LpxA subfamily. Homotrimer.

It localises to the cytoplasm. The catalysed reaction is a (3R)-hydroxyacyl-[ACP] + UDP-N-acetyl-alpha-D-glucosamine = a UDP-3-O-[(3R)-3-hydroxyacyl]-N-acetyl-alpha-D-glucosamine + holo-[ACP]. Its pathway is glycolipid biosynthesis; lipid IV(A) biosynthesis; lipid IV(A) from (3R)-3-hydroxytetradecanoyl-[acyl-carrier-protein] and UDP-N-acetyl-alpha-D-glucosamine: step 1/6. Its function is as follows. Involved in the biosynthesis of lipid A, a phosphorylated glycolipid that anchors the lipopolysaccharide to the outer membrane of the cell. The sequence is that of Acyl-[acyl-carrier-protein]--UDP-N-acetylglucosamine O-acyltransferase from Aliivibrio fischeri (strain ATCC 700601 / ES114) (Vibrio fischeri).